Consider the following 100-residue polypeptide: UPF0213 protein YhbQ (100 aa).

In terms of domain architecture, GIY-YIG spans 2 to 77 (TPWFLYLIRT…KQLTKRQKER (76 aa)).

This sequence belongs to the UPF0213 family.

This chain is UPF0213 protein YhbQ, found in Escherichia coli O17:K52:H18 (strain UMN026 / ExPEC).